We begin with the raw amino-acid sequence, 409 residues long: Accessory Sec system protein translocase subunit SecY2 (409 aa).

10 helical membrane-spanning segments follow: residues 16–36 (ILITFSLIIIFLLGRYVPIPG), 61–81 (LSQVGVFSLGIGPMMTTMILL), 104–124 (VVMLVIAIIQGLAIAISFQYH), 132–152 (LLLATMILVTGAYIISWIGNL), 161–181 (MTILVVVGMLVGQFNNIPLIF), 190–210 (LAIILFLLWTLVAMYLMITFE), 242–262 (GMAFMYVYTLLMFPQYIIILL), 286–306 (GVVIYMILMLVLSVAFTFVNI), 341–361 (LFGTFSGFFMAFLGGVPLLFA), and 374–394 (TGIFMMITGMSFMILDEFQVI).

It belongs to the SecY/SEC61-alpha family. SecY2 subfamily. As to quaternary structure, component of the accessory SecA2/SecY2 protein translocase complex required to export cell wall proteins. May form heterotrimers with SecE and SecG subunits.

It localises to the cell membrane. Functionally, part of the accessory SecA2/SecY2 system specifically required for export of possible cell wall proteins. The central subunit of a protein translocation channel. This Streptococcus agalactiae serotype Ia (strain ATCC 27591 / A909 / CDC SS700) protein is Accessory Sec system protein translocase subunit SecY2.